The chain runs to 430 residues: Glutamate-1-semialdehyde 2,1-aminomutase (430 aa).

Lysine 267 is subject to N6-(pyridoxal phosphate)lysine.

This sequence belongs to the class-III pyridoxal-phosphate-dependent aminotransferase family. HemL subfamily. Homodimer. Pyridoxal 5'-phosphate is required as a cofactor.

The protein resides in the cytoplasm. It catalyses the reaction (S)-4-amino-5-oxopentanoate = 5-aminolevulinate. The protein operates within porphyrin-containing compound metabolism; protoporphyrin-IX biosynthesis; 5-aminolevulinate from L-glutamyl-tRNA(Glu): step 2/2. In Anaeromyxobacter dehalogenans (strain 2CP-1 / ATCC BAA-258), this protein is Glutamate-1-semialdehyde 2,1-aminomutase.